The primary structure comprises 225 residues: Glucosyl-3-phosphoglycerate phosphatase (225 aa).

R10 is a substrate binding site. H11 acts as the Tele-phosphohistidine intermediate in catalysis. Substrate is bound at residue R60. The Proton donor/acceptor role is filled by E84. Position 158 (H158) interacts with substrate.

The protein belongs to the phosphoglycerate mutase family. Homodimer.

It carries out the reaction (2R)-2-O-(alpha-D-glucopyranosyl)-3-phospho-glycerate + H2O = (2R)-2-O-(alpha-D-glucopyranosyl)-glycerate + phosphate. Involved in the biosynthesis of mycobacterial methylglucose lipopolysaccharides (MGLP). Catalyzes the dephosphorylation of glucosyl-3-phosphoglycerate (GPG) to glucosylglycerate. The protein is Glucosyl-3-phosphoglycerate phosphatase of Mycolicibacterium vanbaalenii (strain DSM 7251 / JCM 13017 / BCRC 16820 / KCTC 9966 / NRRL B-24157 / PYR-1) (Mycobacterium vanbaalenii).